The sequence spans 195 residues: HTH-type transcriptional regulator BetI (195 aa).

Residues 8–68 (SIRRRQLIDA…ATMRDITSQL (61 aa)) form the HTH tetR-type domain. A DNA-binding region (H-T-H motif) is located at residues 31–50 (TIAQIARRAGVSTGIISHYF).

It participates in amine and polyamine biosynthesis; betaine biosynthesis via choline pathway [regulation]. Its function is as follows. Repressor involved in the biosynthesis of the osmoprotectant glycine betaine. It represses transcription of the choline transporter BetT and the genes of BetAB involved in the synthesis of glycine betaine. This chain is HTH-type transcriptional regulator BetI, found in Escherichia coli O17:K52:H18 (strain UMN026 / ExPEC).